Consider the following 120-residue polypeptide: Large ribosomal subunit protein uL22 (120 aa).

The tract at residues Met1 to Ala25 is disordered.

Belongs to the universal ribosomal protein uL22 family. As to quaternary structure, part of the 50S ribosomal subunit.

Functionally, this protein binds specifically to 23S rRNA; its binding is stimulated by other ribosomal proteins, e.g. L4, L17, and L20. It is important during the early stages of 50S assembly. It makes multiple contacts with different domains of the 23S rRNA in the assembled 50S subunit and ribosome. The globular domain of the protein is located near the polypeptide exit tunnel on the outside of the subunit, while an extended beta-hairpin is found that lines the wall of the exit tunnel in the center of the 70S ribosome. This Borrelia recurrentis (strain A1) protein is Large ribosomal subunit protein uL22.